A 427-amino-acid chain; its full sequence is Glutamate-1-semialdehyde 2,1-aminomutase (427 aa).

Lys264 bears the N6-(pyridoxal phosphate)lysine mark.

This sequence belongs to the class-III pyridoxal-phosphate-dependent aminotransferase family. HemL subfamily. As to quaternary structure, homodimer. The cofactor is pyridoxal 5'-phosphate.

The protein localises to the cytoplasm. It carries out the reaction (S)-4-amino-5-oxopentanoate = 5-aminolevulinate. It functions in the pathway porphyrin-containing compound metabolism; protoporphyrin-IX biosynthesis; 5-aminolevulinate from L-glutamyl-tRNA(Glu): step 2/2. The sequence is that of Glutamate-1-semialdehyde 2,1-aminomutase from Campylobacter concisus (strain 13826).